Reading from the N-terminus, the 534-residue chain is Acetyltransferase MATC1 (534 aa).

Residues histidine 186 and aspartate 459 each act as proton acceptor in the active site.

It belongs to the plant acyltransferase family.

The protein localises to the cell membrane. The protein operates within secondary metabolite biosynthesis. Its function is as follows. Acetyltransferase; part of the gene cluster that mediates the biosynthesis of mannosylerythritol lipids (MELs), surface-active substances that enhance the availability of water-insoluble substrates. Mannosylerythritol lipid production is responsible for hemolytic activity of Ustilago maydis. Depending on the number of acetyl groups, mannosylerythritol lipids can be differentiated into MEL A (fully acetylated), MEL B and MEL C (monoacetylated at R-6 and R-4, respectively), and the fully deacetylated MEL D. The first step in the pathway is the generation of mannosylerythritol by the glycosyltransferase EMT1 which catalyzes the transfer of GDP-mannose to the C-4 atom of meso-erythritol. This reaction has to be stereospecific, since only mannosyl-D-erythritol is generated. The produced disaccharide is subsequently acylated with fatty acids of various lengths derived from the peroxisomal beta-oxidation by the peroxisomal acyltransferases MAC1 and MAC2 at positions C-2 and C-3, repectively. The existence of MEL derivatives which carry an acetyl group at C-2 implies that at least MAC1 also accepts acetyl-CoA as a donor. The final step of MEL biosynthesis is the acetylation of the fully acylated mannosylerythritol lipids catalyzed by the acetyl-CoA-dependent acetyltransferase MAT1. MAT1 displays a relaxed regioselectivity and is able to transfer acetylgroups to both positions C-4 and C-6 of the mannosyl moiety. This Mycosarcoma maydis (Corn smut fungus) protein is Acetyltransferase MATC1.